Consider the following 637-residue polypeptide: 1-deoxy-D-xylulose-5-phosphate synthase (637 aa).

Thiamine diphosphate contacts are provided by residues His-71 and 112–114; that span reads SHA. Residue Asp-144 participates in Mg(2+) binding. Thiamine diphosphate contacts are provided by residues 145–146, Asn-173, Tyr-284, and Glu-365; that span reads GA. Residue Asn-173 participates in Mg(2+) binding.

This sequence belongs to the transketolase family. DXPS subfamily. Homodimer. The cofactor is Mg(2+). Thiamine diphosphate serves as cofactor.

It catalyses the reaction D-glyceraldehyde 3-phosphate + pyruvate + H(+) = 1-deoxy-D-xylulose 5-phosphate + CO2. It functions in the pathway metabolic intermediate biosynthesis; 1-deoxy-D-xylulose 5-phosphate biosynthesis; 1-deoxy-D-xylulose 5-phosphate from D-glyceraldehyde 3-phosphate and pyruvate: step 1/1. Its function is as follows. Catalyzes the acyloin condensation reaction between C atoms 2 and 3 of pyruvate and glyceraldehyde 3-phosphate to yield 1-deoxy-D-xylulose-5-phosphate (DXP). The sequence is that of 1-deoxy-D-xylulose-5-phosphate synthase from Mycobacterium ulcerans (strain Agy99).